The primary structure comprises 173 residues: Probable xanthine dehydrogenase subunit E (173 aa).

A 2Fe-2S ferredoxin-type domain is found at 14-90 (EQFRMTVNGQ…GHSITTIEGL (77 aa)). Cys-52, Cys-57, Cys-60, Cys-72, Cys-110, Cys-113, Cys-145, and Cys-147 together coordinate [2Fe-2S] cluster.

As to quaternary structure, could be composed of four subunits: PucA, PucC, PucD and PucE. Requires [2Fe-2S] cluster as cofactor.

The enzyme catalyses xanthine + NAD(+) + H2O = urate + NADH + H(+). It catalyses the reaction hypoxanthine + NAD(+) + H2O = xanthine + NADH + H(+). It participates in purine metabolism; hypoxanthine degradation; urate from hypoxanthine: step 1/2. It functions in the pathway purine metabolism; hypoxanthine degradation; urate from hypoxanthine: step 2/2. In terms of biological role, oxidizes hypoxanthine and xanthine to uric acid. This is Probable xanthine dehydrogenase subunit E (pucE) from Bacillus subtilis (strain 168).